Reading from the N-terminus, the 65-residue chain is Large ribosomal subunit protein bL35 (65 aa).

Positions 1 to 46 (MPKIKTNRGAAKRFKPTGSGGFKRAQSHRRHILTKKSTKRKRHLRS) are disordered. Basic residues predominate over residues 25 to 45 (AQSHRRHILTKKSTKRKRHLR).

Belongs to the bacterial ribosomal protein bL35 family.

This Thioalkalivibrio sulfidiphilus (strain HL-EbGR7) protein is Large ribosomal subunit protein bL35.